Reading from the N-terminus, the 501-residue chain is MGSRPPCGATSSARRACQFPAPMAAAREPELPQEAPATEPAPPPACRFFLEGRCRFGARCRQPHPGAPAPPGREAQPEAGAKKPPLRTAADVIQRIRWDPRLDPADFSVGYVDRFLGVREEPFSAFCWDQPLAALGPGVLAVPQHRVRFFRFHGRLVWDRASRTDLVFGSGSAAGRGPTILDAPNTEGAHGAEGAEWTLAGTGQEAQAAPKRGSTRPLCTGHQEPGVEEPGELEAAQERALGTAADLGTLAPRGRLAGVTEEALKPTAATRTTLLGGKEAQALGVPGGSAETTEAEWGPAAWPEDKRARLSVAAPCQPRPTHFVALMVTEPGLQAEVTKAQEYLVHVAPHCANFLVPSQNLHLTLALLRLAGAGEEAAAIGALRRALLAPGLNAPPRLSFRKLVLLGPHVLCAPPSPTLESMAQVLSQRLEAEGLSTLQSPGQLHPHLTVAKVPHGSQVHLPKLEFTLSQEVGCQPLQTLWLCRIGRTGGPFQPLAEIRLE.

Disordered stretches follow at residues 1–43 (MGSR…PAPP), 61–86 (RQPH…KPPL), 203–234 (GQEA…GELE), and 281–300 (QALG…WGPA). A C3H1-type zinc finger spans residues 40–67 (PAPPPACRFFLEGRCRFGARCRQPHPGA).

In Homo sapiens (Human), this protein is Leukocyte receptor cluster member 9 (LENG9).